The primary structure comprises 250 residues: GTP cyclohydrolase 1 type 2 homolog (250 aa).

His63, His64, Asp100, His218, and Glu222 together coordinate a divalent metal cation.

It belongs to the GTP cyclohydrolase I type 2/NIF3 family. Homohexamer.

The sequence is that of GTP cyclohydrolase 1 type 2 homolog from Pyrococcus abyssi (strain GE5 / Orsay).